The following is a 207-amino-acid chain: Protein GrpE (207 aa).

Composition is skewed to basic and acidic residues over residues 1-11 (MEENRDVKNEE) and 57-66 (DLVKNQEEEN). The disordered stretch occupies residues 1–66 (MEENRDVKNE…DLVKNQEEEN (66 aa)).

This sequence belongs to the GrpE family. Homodimer.

It localises to the cytoplasm. In terms of biological role, participates actively in the response to hyperosmotic and heat shock by preventing the aggregation of stress-denatured proteins, in association with DnaK and GrpE. It is the nucleotide exchange factor for DnaK and may function as a thermosensor. Unfolded proteins bind initially to DnaJ; upon interaction with the DnaJ-bound protein, DnaK hydrolyzes its bound ATP, resulting in the formation of a stable complex. GrpE releases ADP from DnaK; ATP binding to DnaK triggers the release of the substrate protein, thus completing the reaction cycle. Several rounds of ATP-dependent interactions between DnaJ, DnaK and GrpE are required for fully efficient folding. This is Protein GrpE from Clostridium beijerinckii (strain ATCC 51743 / NCIMB 8052) (Clostridium acetobutylicum).